The sequence spans 501 residues: Glutamyl-tRNA(Gln) amidotransferase subunit A (501 aa).

Active-site charge relay system residues include lysine 80 and serine 155. Serine 179 acts as the Acyl-ester intermediate in catalysis.

This sequence belongs to the amidase family. GatA subfamily. As to quaternary structure, heterotrimer of A, B and C subunits.

The enzyme catalyses L-glutamyl-tRNA(Gln) + L-glutamine + ATP + H2O = L-glutaminyl-tRNA(Gln) + L-glutamate + ADP + phosphate + H(+). Functionally, allows the formation of correctly charged Gln-tRNA(Gln) through the transamidation of misacylated Glu-tRNA(Gln) in organisms which lack glutaminyl-tRNA synthetase. The reaction takes place in the presence of glutamine and ATP through an activated gamma-phospho-Glu-tRNA(Gln). This is Glutamyl-tRNA(Gln) amidotransferase subunit A from Cupriavidus necator (strain ATCC 17699 / DSM 428 / KCTC 22496 / NCIMB 10442 / H16 / Stanier 337) (Ralstonia eutropha).